Here is a 114-residue protein sequence, read N- to C-terminus: Lymphotactin (114 aa).

Residues 1–21 (MRLLLLTFLGVCCLTPWVVEG) form the signal peptide. An intrachain disulfide couples cysteine 32 to cysteine 69. Residues 92 to 114 (KNMAETVPTGAQRSTSTAITLTG) are disordered. A compositionally biased stretch (polar residues) spans 100–114 (TGAQRSTSTAITLTG).

It belongs to the intercrine gamma family. In terms of tissue distribution, expressed in activated CD8(+) T cells. In the thymus, expressed by medullary thymic epithelial cells.

Its subcellular location is the secreted. In terms of biological role, chemotactic activity for lymphocytes but not for monocytes or neutrophils. In thymus, mediates medullary accumulation of thymic dendritic cells and contributes to regulatoy T cell development, playing a role in self-tolerance establishment. The protein is Lymphotactin (Xcl1) of Mus musculus (Mouse).